Here is a 356-residue protein sequence, read N- to C-terminus: Histidine biosynthesis bifunctional protein HisB (356 aa).

A histidinol-phosphatase region spans residues 1 to 166 (MSKKVLFIDR…AICNYLTSLN (166 aa)). The active-site Nucleophile is aspartate 9. Mg(2+) contacts are provided by aspartate 9 and aspartate 11. Aspartate 11 functions as the Proton donor in the catalytic mechanism. Zn(2+) contacts are provided by cysteine 93, histidine 95, cysteine 101, and cysteine 103. Aspartate 130 contacts Mg(2+). The interval 167 to 356 (RYAHVKRITK…VLPSSKGVLS (190 aa)) is imidazoleglycerol-phosphate dehydratase.

In the N-terminal section; belongs to the histidinol-phosphatase family. It in the C-terminal section; belongs to the imidazoleglycerol-phosphate dehydratase family. It depends on Mg(2+) as a cofactor. Zn(2+) serves as cofactor.

The protein resides in the cytoplasm. The enzyme catalyses D-erythro-1-(imidazol-4-yl)glycerol 3-phosphate = 3-(imidazol-4-yl)-2-oxopropyl phosphate + H2O. The catalysed reaction is L-histidinol phosphate + H2O = L-histidinol + phosphate. It participates in amino-acid biosynthesis; L-histidine biosynthesis; L-histidine from 5-phospho-alpha-D-ribose 1-diphosphate: step 6/9. Its pathway is amino-acid biosynthesis; L-histidine biosynthesis; L-histidine from 5-phospho-alpha-D-ribose 1-diphosphate: step 8/9. The chain is Histidine biosynthesis bifunctional protein HisB from Baumannia cicadellinicola subsp. Homalodisca coagulata.